The primary structure comprises 239 residues: Purine nucleoside phosphorylase DeoD-type (239 aa).

Residue His5 coordinates a purine D-ribonucleoside. Phosphate-binding positions include Gly21, Arg25, Arg44, and 88 to 91 (RVGS). A purine D-ribonucleoside is bound by residues 180–182 (EME) and 204–205 (SD). Asp205 functions as the Proton donor in the catalytic mechanism.

Belongs to the PNP/UDP phosphorylase family. As to quaternary structure, homohexamer; trimer of homodimers.

The catalysed reaction is a purine D-ribonucleoside + phosphate = a purine nucleobase + alpha-D-ribose 1-phosphate. It catalyses the reaction a purine 2'-deoxy-D-ribonucleoside + phosphate = a purine nucleobase + 2-deoxy-alpha-D-ribose 1-phosphate. In terms of biological role, catalyzes the reversible phosphorolytic breakdown of the N-glycosidic bond in the beta-(deoxy)ribonucleoside molecules, with the formation of the corresponding free purine bases and pentose-1-phosphate. The chain is Purine nucleoside phosphorylase DeoD-type from Salmonella choleraesuis (strain SC-B67).